We begin with the raw amino-acid sequence, 632 residues long: ATP-dependent zinc metalloprotease FtsH (632 aa).

The Cytoplasmic portion of the chain corresponds to 1-9 (MKPTNEPKK). Residues 10-30 (PFFQSPIILAVLGGILLIFFL) form a helical membrane-spanning segment. At 31 to 116 (RSFNSDGSFS…INYSGFSESN (86 aa)) the chain is on the periplasmic side. A helical transmembrane segment spans residues 117-137 (FFTDMLGWLMPILVILGLWMF). Residues 138–632 (MANRMQKNMG…RLIPLEEQAS (495 aa)) lie on the Cytoplasmic side of the membrane. Residues A173, 213–217 (GTGKT), and H354 contribute to the ATP site. H434 is a binding site for Zn(2+). E435 is a catalytic residue. Residues H438 and D511 each coordinate Zn(2+).

This sequence in the central section; belongs to the AAA ATPase family. In the C-terminal section; belongs to the peptidase M41 family. As to quaternary structure, homohexamer. Requires Zn(2+) as cofactor.

It localises to the cell inner membrane. Functionally, acts as a processive, ATP-dependent zinc metallopeptidase for both cytoplasmic and membrane proteins. Plays a role in the quality control of integral membrane proteins. The polypeptide is ATP-dependent zinc metalloprotease FtsH (Helicobacter pylori (strain ATCC 700392 / 26695) (Campylobacter pylori)).